The primary structure comprises 311 residues: Natural killer cell receptor 2B4 (311 aa).

Residues 1 to 19 form the signal peptide; that stretch reads MLQQTVLLSLFLLLRAHQG. Over 20–223 the chain is Extracellular; sequence QDCADSSEEV…CQSVPSKFNY (204 aa). Residues cysteine 22 and cysteine 118 are joined by a disulfide bond. 2 consecutive Ig-like domains span residues 22 to 128 and 131 to 215; these read CADS…LIFD and ETPH…QSCQ. N-linked (GlcNAc...) asparagine glycosylation is found at asparagine 101, asparagine 144, asparagine 160, asparagine 183, asparagine 196, and asparagine 205. Cysteine 153 and cysteine 195 are oxidised to a cystine. Residues 224-247 traverse the membrane as a helical segment; the sequence is LPFMVSIGILVKFFHGAIDCFCVW. The Cytoplasmic portion of the chain corresponds to 248–311; sequence NRKRKQSQSI…RRLFQFINRS (64 aa). The tract at residues 275-301 is disordered; it reads RDQRGHFRASGSSSDVRGDERGQRESD. Basic and acidic residues predominate over residues 290-301; the sequence is VRGDERGQRESD.

In terms of assembly, interacts with CD48. Interacts (via phosphorylated ITSM 1-4) with SH2D1A (via SH2 domain); SH2D1A probably mediates association with FYN. Interacts (via phosphorylated ITSM 3) with PTPN11/SHP-2, INPP5D/SHIP1, PTPN6/SHP-1 and CSK; binding of SH2D1A/SAP prevents association with PTPN11, PTPN6 and CSK; conflictingly a similar association has been described for phosphorylated ITSM 1 also including GRB2 and PLCG1. Interacts weakly (via phosphorylated ITSM 2) with PTPN11/SHP-2 and CSK. Interacts with SH2D1B. Interacts with PIK3R1; PI3K recruits SH2D1A. Interacts with MHC class I proteins; the interaction is proposed to prevent self-killing of NK cells. N-linked glycosylation is essential for the binding to its ligand CD48. Also O-glycosylated, in contrast, O-linked sialylation has a negative impact on ligand binding. In terms of processing, phosphorylated by FYN and CSK on tyrosine residues following activation. Coligation with inhibitory receptors such as KIR2DL1 inhibits phosphorylation upon contact of NK cells with sensitive target cells.

The protein localises to the membrane. The protein resides in the cell membrane. Its subcellular location is the membrane raft. Its function is as follows. Heterophilic receptor of the signaling lymphocytic activation molecule (SLAM) family; its ligand is CD48. SLAM receptors triggered by homo- or heterotypic cell-cell interactions are modulating the activation and differentiation of a wide variety of immune cells and thus are involved in the regulation and interconnection of both innate and adaptive immune response. Activities are controlled by presence or absence of small cytoplasmic adapter proteins, SH2D1A/SAP and/or SH2D1B/EAT-2. Acts as activating natural killer (NK) cell receptor. Activating function implicates association with SH2D1A and FYN. Downstreaming signaling involves predominantly VAV1, and, to a lesser degree, INPP5D/SHIP1 and CBL. Signal attenuation in the absence of SH2D1A is proposed to be dependent on INPP5D and to a lesser extent PTPN6/SHP-1 and PTPN11/SHP-2. Stimulates NK cell cytotoxicity, production of IFN-gamma and granule exocytosis. Optimal expansion and activation of NK cells seems to be dependent on the engagement of CD244 with CD48 expressed on neighboring NK cells. Acts as costimulator in NK activation by enhancing signals by other NK receptors such as NCR3 and NCR1. At early stages of NK cell differentiation may function as an inhibitory receptor possibly ensuring the self-tolerance of developing NK cells. Involved in the regulation of CD8(+) T-cell proliferation; expression on activated T-cells and binding to CD48 provides costimulatory-like function for neighboring T-cells. Inhibits inflammatory responses in dendritic cells (DCs). This chain is Natural killer cell receptor 2B4 (Cd244), found in Rattus norvegicus (Rat).